Here is a 1378-residue protein sequence, read N- to C-terminus: DNA-directed RNA polymerase subunit beta (1378 aa).

Belongs to the RNA polymerase beta chain family. As to quaternary structure, the RNAP catalytic core consists of 2 alpha, 1 beta, 1 beta' and 1 omega subunit. When a sigma factor is associated with the core the holoenzyme is formed, which can initiate transcription.

It carries out the reaction RNA(n) + a ribonucleoside 5'-triphosphate = RNA(n+1) + diphosphate. Its function is as follows. DNA-dependent RNA polymerase catalyzes the transcription of DNA into RNA using the four ribonucleoside triphosphates as substrates. This is DNA-directed RNA polymerase subunit beta from Hyphomonas neptunium (strain ATCC 15444).